We begin with the raw amino-acid sequence, 76 residues long: Large ribosomal subunit protein bL31 (76 aa).

It belongs to the bacterial ribosomal protein bL31 family. Type A subfamily. Part of the 50S ribosomal subunit.

Its function is as follows. Binds the 23S rRNA. The chain is Large ribosomal subunit protein bL31 from Rhizorhabdus wittichii (strain DSM 6014 / CCUG 31198 / JCM 15750 / NBRC 105917 / EY 4224 / RW1) (Sphingomonas wittichii).